Consider the following 467-residue polypeptide: Prenyltransferase GME11375 (467 aa).

An L-tryptophan-binding site is contributed by Glu93. Dimethylallyl diphosphate is bound by residues Arg108, Lys196, Tyr198, Lys266, Tyr268, and Tyr436.

It belongs to the tryptophan dimethylallyltransferase family.

The protein operates within secondary metabolite biosynthesis. In terms of biological role, prenyltransferase; part of the gene cluster that mediates the biosynthesis of dibenzodioxocinones such as pestalotiollide B, a novel class of inhibitors against cholesterol ester transfer protein (CEPT). The biosynthesis initiates from condensation of acetate and malonate units catalyzed by the non-reducing PKS pks8/GME11356. Pks8/GME11356 lacks a thioesterase (TE) domain, which is important to the cyclizing of the third ring of atrochrysone carboxylic acid, and the esterase GME11355 might play the role of TE and catalyzes the cyclization reaction of the C ring. The lactamase-like protein GME11357 (or other beta-lactamases in Pestalotiopsis microspora) probably hydrolyzes the thioester bond between the ACP of pks8/GME11356 and the intermediate to release atrochrysone carboxylic acid, which is spontaneously dehydrates to form endocrocin anthrone. Endocrocin anthrone is further converted to emodin via the endocrocin intermediate. Emodin is then oxidized by several enzymes such as the Baeyer-Villiger oxidase GME11358, the oxidoreductase GME11367, the short chain dehydrogenase/reductase GME11373, as well as by other oxidoreductases from the cluster, to modify the A and C rings and open the B ring, and finally yield monodictyphenone. The prenyltransferase GME11375 may catalyze the addition reaction between the C5 side chains and the carbon bone of dibenzodioxocinones. The remaining biochemical reactions to the final product dibenzodioxocinones should be methylation catalyzed by methyltransferase GME11366 and reduction and lactonization reaction catalyzed by a series of oxidordeuctases. This Pestalotiopsis microspora protein is Prenyltransferase GME11375.